The chain runs to 479 residues: NADH-quinone oxidoreductase subunit N (479 aa).

A run of 14 helical transmembrane segments spans residues 3 to 23 (MLYG…FQLI), 40 to 60 (IGFA…FNGI), 77 to 97 (IIIL…IKVA), 102 to 122 (HSEY…LVSA), 125 to 145 (FMVM…LTTF), 159 to 179 (YFIL…LVYG), 200 to 220 (MAVL…KLSI), 234 to 254 (APLV…LALL), 268 to 288 (FFYI…VGAF), 299 to 319 (FIAY…VANS), 327 to 347 (ISYF…AIII), 373 to 393 (SILI…AGFI), 409 to 429 (ELII…LNIV), and 452 to 472 (LVSI…MLFG).

It belongs to the complex I subunit 2 family. As to quaternary structure, NDH-1 is composed of 14 different subunits. Subunits NuoA, H, J, K, L, M, N constitute the membrane sector of the complex.

It is found in the cell inner membrane. The enzyme catalyses a quinone + NADH + 5 H(+)(in) = a quinol + NAD(+) + 4 H(+)(out). In terms of biological role, NDH-1 shuttles electrons from NADH, via FMN and iron-sulfur (Fe-S) centers, to quinones in the respiratory chain. The immediate electron acceptor for the enzyme in this species is believed to be ubiquinone. Couples the redox reaction to proton translocation (for every two electrons transferred, four hydrogen ions are translocated across the cytoplasmic membrane), and thus conserves the redox energy in a proton gradient. The protein is NADH-quinone oxidoreductase subunit N of Orientia tsutsugamushi (strain Ikeda) (Rickettsia tsutsugamushi).